The chain runs to 334 residues: Type IV inositol polyphosphate 5-phosphatase 11 (334 aa).

2 catalytic regions span residues 206–222 (DLTVWLGDLNYRIQDVS) and 282–297 (KIRVPAWTDRILFKIQ).

This sequence belongs to the inositol polyphosphate 5-phosphatase family. As to expression, expressed ubiquitously.

The protein resides in the cell membrane. The catalysed reaction is a 1,2-diacyl-sn-glycero-3-phospho-(1D-myo-inositol-4,5-bisphosphate) + H2O = a 1,2-diacyl-sn-glycero-3-phospho-(1D-myo-inositol 4-phosphate) + phosphate. It carries out the reaction a 1,2-diacyl-sn-glycero-3-phospho-(1D-myo-inositol-3,4,5-trisphosphate) + H2O = a 1,2-diacyl-sn-glycero-3-phospho-(1D-myo-inositol-3,4-bisphosphate) + phosphate. Has phosphatase activity toward PtdIns(4,5)P2, and in vitro toward PtdIns(3,5)P2 and PtdIns(3,4,5)P3. Cannot dephosphorylate PtdIns(5)P, Ins(1,4,5)P3 and Ins(1,3,4,5)P4. The sequence is that of Type IV inositol polyphosphate 5-phosphatase 11 from Arabidopsis thaliana (Mouse-ear cress).